The following is a 530-amino-acid chain: Autoinducer-2 kinase (530 aa).

This sequence belongs to the FGGY kinase family.

It is found in the cytoplasm. The enzyme catalyses (S)-4,5-dihydroxypentane-2,3-dione + ATP = (2S)-2-hydroxy-3,4-dioxopentyl phosphate + ADP + H(+). Catalyzes the phosphorylation of autoinducer-2 (AI-2) to phospho-AI-2, which subsequently inactivates the transcriptional regulator LsrR and leads to the transcription of the lsr operon. Phosphorylates the ring-open form of (S)-4,5-dihydroxypentane-2,3-dione (DPD), which is the precursor to all AI-2 signaling molecules, at the C5 position. This Escherichia coli O139:H28 (strain E24377A / ETEC) protein is Autoinducer-2 kinase.